Consider the following 337-residue polypeptide: Pyrophosphate--fructose 6-phosphate 1-phosphotransferase (337 aa).

Position 10 (Gly10) interacts with diphosphate. Asp101 is a binding site for Mg(2+). Substrate contacts are provided by residues 124–126, Arg161, 168–170, Glu220, Arg257, and 263–266; these read TID, MGR, and HTIR. Asp126 acts as the Proton acceptor in catalysis.

The protein belongs to the phosphofructokinase type A (PFKA) family. Mixed-substrate PFK group III subfamily. Homodimer or homotrimer. It depends on Mg(2+) as a cofactor.

Its subcellular location is the cytoplasm. It carries out the reaction beta-D-fructose 6-phosphate + diphosphate = beta-D-fructose 1,6-bisphosphate + phosphate + H(+). It participates in carbohydrate degradation; glycolysis; D-glyceraldehyde 3-phosphate and glycerone phosphate from D-glucose: step 3/4. Its activity is regulated as follows. Non-allosteric. Catalyzes the phosphorylation of D-fructose 6-phosphate, the first committing step of glycolysis. Uses inorganic phosphate (PPi) as phosphoryl donor instead of ATP like common ATP-dependent phosphofructokinases (ATP-PFKs), which renders the reaction reversible, and can thus function both in glycolysis and gluconeogenesis. Consistently, PPi-PFK can replace the enzymes of both the forward (ATP-PFK) and reverse (fructose-bisphosphatase (FBPase)) reactions. In Thermoproteus tenax (strain ATCC 35583 / DSM 2078 / JCM 9277 / NBRC 100435 / Kra 1), this protein is Pyrophosphate--fructose 6-phosphate 1-phosphotransferase.